The sequence spans 270 residues: Methionine-rich protein (270 aa).

An N-terminal signal peptide occupies residues 1-18 (MLSLWAIGLLGLLNQVEA). Over residues 31 to 52 (QRSAQFSSSGWGTSPAAQNPWS) the composition is skewed to polar residues. The tract at residues 31-95 (QRSAQFSSSG…MPGSMPGAMP (65 aa)) is disordered. Over residues 56–95 (PMPNTNMPNMNTGSLPGSMPGAMPGSMPGAMPGSMPGAMP) the composition is skewed to low complexity.

As to expression, component of the acid-soluble organic matrix of calcified layers of the shell (at protein level).

It localises to the secreted. This is Methionine-rich protein from Lottia gigantea (Giant owl limpet).